Consider the following 505-residue polypeptide: DNA repair protein RadA (505 aa).

Residues Cys10 to Cys27 form a C4-type zinc finger. ATP is bound at residue Gly107–Ser114. The RadA KNRFG motif motif lies at Lys281 to Gly285. A lon-protease-like region spans residues Asp380–Asp505. The interval Asn485–Asp505 is disordered. The span at Ala495–Asp505 shows a compositional bias: basic and acidic residues.

It belongs to the RecA family. RadA subfamily.

In terms of biological role, DNA-dependent ATPase involved in processing of recombination intermediates, plays a role in repairing DNA breaks. Stimulates the branch migration of RecA-mediated strand transfer reactions, allowing the 3' invading strand to extend heteroduplex DNA faster. Binds ssDNA in the presence of ADP but not other nucleotides, has ATPase activity that is stimulated by ssDNA and various branched DNA structures, but inhibited by SSB. Does not have RecA's homology-searching function. The sequence is that of DNA repair protein RadA from Synechocystis sp. (strain ATCC 27184 / PCC 6803 / Kazusa).